The following is an 899-amino-acid chain: Translation initiation factor IF-2 (899 aa).

2 disordered regions span residues 65 to 84 (KTRS…SVQI) and 91 to 310 (TYVK…SFNK). Residues 68–82 (STLNVPSTGGKSKSV) show a composition bias toward polar residues. Basic and acidic residues predominate over residues 108-164 (QARREAEEQAQRAAEEQAKREAELREAAEKAKRAADEQAKREAAEKAKRDVAEKEKV). Over residues 165–174 (TNQQNENMTK) the composition is skewed to polar residues. Over residues 177–236 (QAEKAKREAEAAELKRKAEEAARLKVEEEARRIAEEARRMAEENAGRWEAESAKPEESAD) the composition is skewed to basic and acidic residues. Positions 262 to 276 (SRSRAGKVTKQKKGN) are enriched in basic residues. Basic and acidic residues predominate over residues 277–290 (RQSESKADREEARA). Residues 398–567 (ARAPVVTIMG…LLQAEVLELK (170 aa)) enclose the tr-type G domain. The interval 407–414 (GHVDHGKT) is G1. 407–414 (GHVDHGKT) lines the GTP pocket. Positions 432 to 436 (GITQH) are G2. Residues 453 to 456 (DTPG) are G3. GTP is bound by residues 453–457 (DTPGH) and 507–510 (NKID). The G4 stretch occupies residues 507-510 (NKID). The G5 stretch occupies residues 543 to 545 (SAK).

Belongs to the TRAFAC class translation factor GTPase superfamily. Classic translation factor GTPase family. IF-2 subfamily.

The protein resides in the cytoplasm. Its function is as follows. One of the essential components for the initiation of protein synthesis. Protects formylmethionyl-tRNA from spontaneous hydrolysis and promotes its binding to the 30S ribosomal subunits. Also involved in the hydrolysis of GTP during the formation of the 70S ribosomal complex. The chain is Translation initiation factor IF-2 from Pectobacterium carotovorum subsp. carotovorum (strain PC1).